Consider the following 173-residue polypeptide: uncharacterized protein (173 aa).

Residues 2-171 (VTVREAKLED…PDLSALKTLL (170 aa)) form the N-acetyltransferase domain.

This sequence belongs to the acetyltransferase family.

This is an uncharacterized protein from Bacillus subtilis (strain 168).